A 104-amino-acid polypeptide reads, in one-letter code: MTAPTKMTFFSRFEADILAGKKTITIRDESEKDYQPGTTVEVSTLEEGRVFCQLKILSVEPIAFSELNEFHAEQENMTLATLKEVIQEIYPGIEQLYVIQYQRV.

The 87-residue stretch at 7–93 (MTFFSRFEAD…EVIQEIYPGI (87 aa)) folds into the ASCH domain. The active-site Proton acceptor is Lys-22. The active-site Nucleophile is the Thr-25. Glu-75 serves as the catalytic Proton donor.

This sequence belongs to the N(4)-acetylcytidine amidohydrolase family.

It carries out the reaction N(4)-acetylcytidine + H2O = cytidine + acetate + H(+). It catalyses the reaction N(4)-acetyl-2'-deoxycytidine + H2O = 2'-deoxycytidine + acetate + H(+). The enzyme catalyses N(4)-acetylcytosine + H2O = cytosine + acetate + H(+). In terms of biological role, catalyzes the hydrolysis of N(4)-acetylcytidine (ac4C). The polypeptide is N(4)-acetylcytidine amidohydrolase (Vibrio vulnificus (strain YJ016)).